Here is a 193-residue protein sequence, read N- to C-terminus: Ubiquitin-conjugating enzyme E2 E1 (193 aa).

The interval 1 to 45 (MSDDDSRASTSSSSSSSSNQQTEKETNTPKKKESKVSMSKNSKLL) is disordered. Residue Ser-2 is modified to N-acetylserine. A compositionally biased stretch (low complexity) spans 8–18 (ASTSSSSSSSS). Over residues 22-35 (TEKETNTPKKKESK) the composition is skewed to basic and acidic residues. Residues 36–45 (VSMSKNSKLL) are compositionally biased toward polar residues. The UBC core domain maps to 47–193 (TSAKRIQKEL…ARQWTKRYAT (147 aa)). Catalysis depends on Cys-131, which acts as the Glycyl thioester intermediate. Lys-136 participates in a covalent cross-link: Glycyl lysine isopeptide (Lys-Gly) (interchain with G-Cter in ISG15).

It belongs to the ubiquitin-conjugating enzyme family. As to quaternary structure, interacts with RNF14. ISGylation suppresses ubiquitin E2 enzyme activity. In terms of processing, autoubiquitinated in vitro.

It is found in the nucleus. The enzyme catalyses S-ubiquitinyl-[E1 ubiquitin-activating enzyme]-L-cysteine + [E2 ubiquitin-conjugating enzyme]-L-cysteine = [E1 ubiquitin-activating enzyme]-L-cysteine + S-ubiquitinyl-[E2 ubiquitin-conjugating enzyme]-L-cysteine.. It carries out the reaction S-ubiquitinyl-[E1 ubiquitin-activating enzyme]-L-cysteine + [acceptor protein]-L-lysine = [E1 ubiquitin-activating enzyme]-L-cysteine + N(6)-monoubiquitinyl-[acceptor protein]-L-lysine.. The protein operates within protein modification; protein ubiquitination. In terms of biological role, accepts ubiquitin from the E1 complex and catalyzes its covalent attachment to other proteins. Catalyzes the covalent attachment of ISG15 to other proteins. Mediates the selective degradation of short-lived and abnormal proteins. In vitro also catalyzes 'Lys-48'-linked polyubiquitination. Catalyzes monoubiquitination of other proteins in both an E3-dependent and E3-independent manner. The protein is Ubiquitin-conjugating enzyme E2 E1 of Homo sapiens (Human).